Consider the following 305-residue polypeptide: Sulfate adenylyltransferase subunit 2 (305 aa).

It belongs to the PAPS reductase family. CysD subfamily. Heterodimer composed of CysD, the smaller subunit, and CysN.

It carries out the reaction sulfate + ATP + H(+) = adenosine 5'-phosphosulfate + diphosphate. It participates in sulfur metabolism; hydrogen sulfide biosynthesis; sulfite from sulfate: step 1/3. Functionally, with CysN forms the ATP sulfurylase (ATPS) that catalyzes the adenylation of sulfate producing adenosine 5'-phosphosulfate (APS) and diphosphate, the first enzymatic step in sulfur assimilation pathway. APS synthesis involves the formation of a high-energy phosphoric-sulfuric acid anhydride bond driven by GTP hydrolysis by CysN coupled to ATP hydrolysis by CysD. This is Sulfate adenylyltransferase subunit 2 from Pseudomonas fluorescens (strain ATCC BAA-477 / NRRL B-23932 / Pf-5).